The following is a 185-amino-acid chain: Lipid A acyltransferase PagP (185 aa).

The signal sequence occupies residues 1-24 (MKTHNDILAALAALPLFLTGAAFA). Catalysis depends on residues His-57, Asp-100, and Ser-101.

This sequence belongs to the lipid A palmitoyltransferase family. As to quaternary structure, homodimer.

The protein localises to the cell outer membrane. The catalysed reaction is a lipid A + a 1,2-diacyl-sn-glycero-3-phosphocholine = a hepta-acyl lipid A + a 2-acyl-sn-glycero-3-phosphocholine. It catalyses the reaction a lipid IVA + a 1,2-diacyl-sn-glycero-3-phosphocholine = a lipid IVB + a 2-acyl-sn-glycero-3-phosphocholine. It carries out the reaction a lipid IIA + a 1,2-diacyl-sn-glycero-3-phosphocholine = a lipid IIB + a 2-acyl-sn-glycero-3-phosphocholine. Its function is as follows. Transfers a fatty acid residue from the sn-1 position of a phospholipid to the N-linked hydroxyfatty acid chain on the proximal unit of lipid A or its precursors. This Edwardsiella tarda (strain FL6-60) protein is Lipid A acyltransferase PagP.